We begin with the raw amino-acid sequence, 184 residues long: Prolyl-tRNA synthetase associated domain-containing protein 1 (184 aa).

Belongs to the PRORSD1 family.

The polypeptide is Prolyl-tRNA synthetase associated domain-containing protein 1 (Prorsd1) (Danio rerio (Zebrafish)).